Reading from the N-terminus, the 215-residue chain is Probable transaldolase (215 aa).

Residue lysine 83 is the Schiff-base intermediate with substrate of the active site.

Belongs to the transaldolase family. Type 3B subfamily.

It is found in the cytoplasm. It carries out the reaction D-sedoheptulose 7-phosphate + D-glyceraldehyde 3-phosphate = D-erythrose 4-phosphate + beta-D-fructose 6-phosphate. It functions in the pathway carbohydrate degradation; pentose phosphate pathway; D-glyceraldehyde 3-phosphate and beta-D-fructose 6-phosphate from D-ribose 5-phosphate and D-xylulose 5-phosphate (non-oxidative stage): step 2/3. Functionally, transaldolase is important for the balance of metabolites in the pentose-phosphate pathway. This Moorella thermoacetica (strain ATCC 39073 / JCM 9320) protein is Probable transaldolase.